A 213-amino-acid chain; its full sequence is A-type ATP synthase subunit D (213 aa).

Belongs to the V-ATPase D subunit family. As to quaternary structure, has multiple subunits with at least A(3), B(3), C, D, E, F, H, I and proteolipid K(x).

The protein resides in the cell membrane. Functionally, component of the A-type ATP synthase that produces ATP from ADP in the presence of a proton gradient across the membrane. In Saccharolobus islandicus (strain Y.N.15.51 / Yellowstone #2) (Sulfolobus islandicus), this protein is A-type ATP synthase subunit D.